A 64-amino-acid chain; its full sequence is Large ribosomal subunit protein bL35 (64 aa).

The segment covering 1-26 has biased composition (basic residues); that stretch reads MPKIKTHRGAAKRFKKTGTGKIKRSK. The disordered stretch occupies residues 1–48; sequence MPKIKTHRGAAKRFKKTGTGKIKRSKAYASHLLGGKSPKRKRNLRKAG.

The protein belongs to the bacterial ribosomal protein bL35 family.

The polypeptide is Large ribosomal subunit protein bL35 (Syntrophomonas wolfei subsp. wolfei (strain DSM 2245B / Goettingen)).